A 307-amino-acid chain; its full sequence is Elongation factor Ts (307 aa).

The segment at 79–82 is involved in Mg(2+) ion dislocation from EF-Tu; sequence TDFV.

Belongs to the EF-Ts family.

Its subcellular location is the cytoplasm. Its function is as follows. Associates with the EF-Tu.GDP complex and induces the exchange of GDP to GTP. It remains bound to the aminoacyl-tRNA.EF-Tu.GTP complex up to the GTP hydrolysis stage on the ribosome. The sequence is that of Elongation factor Ts from Bartonella tribocorum (strain CIP 105476 / IBS 506).